A 119-amino-acid polypeptide reads, in one-letter code: Ribonuclease P protein component (119 aa).

Belongs to the RnpA family. Consists of a catalytic RNA component (M1 or rnpB) and a protein subunit.

The catalysed reaction is Endonucleolytic cleavage of RNA, removing 5'-extranucleotides from tRNA precursor.. Functionally, RNaseP catalyzes the removal of the 5'-leader sequence from pre-tRNA to produce the mature 5'-terminus. It can also cleave other RNA substrates such as 4.5S RNA. The protein component plays an auxiliary but essential role in vivo by binding to the 5'-leader sequence and broadening the substrate specificity of the ribozyme. The sequence is that of Ribonuclease P protein component from Chlamydia muridarum (strain MoPn / Nigg).